The primary structure comprises 449 residues: Ribosomal protein uS12 methylthiotransferase RimO (449 aa).

An MTTase N-terminal domain is found at 15–125; it reads PRISFVSLGC…VLAAVHEAVP (111 aa). [4Fe-4S] cluster contacts are provided by C24, C60, C89, C156, C160, and C163. The Radical SAM core domain maps to 142 to 379; the sequence is LTPRHYAYLK…MRTQQKVSAR (238 aa). Residues 382 to 448 form the TRAM domain; the sequence is KRKVGTRQSV…PYDLSGTAVG (67 aa).

It belongs to the methylthiotransferase family. RimO subfamily. Requires [4Fe-4S] cluster as cofactor.

It localises to the cytoplasm. It carries out the reaction L-aspartate(89)-[ribosomal protein uS12]-hydrogen + (sulfur carrier)-SH + AH2 + 2 S-adenosyl-L-methionine = 3-methylsulfanyl-L-aspartate(89)-[ribosomal protein uS12]-hydrogen + (sulfur carrier)-H + 5'-deoxyadenosine + L-methionine + A + S-adenosyl-L-homocysteine + 2 H(+). Functionally, catalyzes the methylthiolation of an aspartic acid residue of ribosomal protein uS12. The sequence is that of Ribosomal protein uS12 methylthiotransferase RimO from Xanthobacter autotrophicus (strain ATCC BAA-1158 / Py2).